The chain runs to 302 residues: Adipolin (302 aa).

The signal sequence occupies residues 1–20; it reads MRRWAWAAVVVLLGPQLVLL. 2 disordered regions span residues 28-68 and 86-110; these read EAQR…GPEF and ALRK…PPGA. Asn-43 carries an N-linked (GlcNAc...) asparagine glycan. Residues 86–100 are compositionally biased toward basic and acidic residues; it reads ALRKRCGSRDKKPRD. One can recognise a C1q domain in the interval 147-302; it reads LRLVGEAFHC…SSFSGLLLGT (156 aa).

This sequence belongs to the adipolin/erythroferrone family. In terms of assembly, homomultimer; disulfide-linked. May interact with ERFE. Processed into Adipolin fC1QTNF12 and Adipolin gC1QTNF12 by FURIN. Insulin enhances endogenous C1QTNF12 cleavage. Predominantly expressed by adipose tissues.

The protein resides in the secreted. Its function is as follows. Insulin-sensitizing adipocyte-secreted protein (adipokine) that regulates glucose metabolism in liver and adipose tissue. Promotes glucose uptake in adipocytes and suppresses de novo glucose production in hepatocytes via the PI3K-Akt signaling pathway. Administration lead to reduction of blood glucose. Able to attenuate inflammation in fat tissue. This is Adipolin from Homo sapiens (Human).